Here is a 650-residue protein sequence, read N- to C-terminus: Chaperone protein DnaK (650 aa).

T200 carries the post-translational modification Phosphothreonine; by autocatalysis. The span at 611–634 (AQQAGAAGAAGAAAEGASAQGGAQ) shows a compositional bias: low complexity. The segment at 611-650 (AQQAGAAGAAGAAAEGASAQGGAQPPDDVVDADFKEVKKD) is disordered.

It belongs to the heat shock protein 70 family.

Functionally, acts as a chaperone. The chain is Chaperone protein DnaK from Burkholderia pseudomallei (strain 1710b).